The chain runs to 201 residues: MDIKACYQNAQALLEGHFLLSSGFHSNYYLQSAKVLEDPKLAEQLALELAKQIQEAHLNIECVCSPAIGGILAGYELARALGVRFIFTERVDNIMTLRRGFEVKKNEKILVCEDIITTGKSAMECAKVLEEKGAHIVAFGALANRGICKRAHSHLKAQEGACLPSHLPLFALEDFVFDMHKPSSCPLCATSVAIKPGSRGN.

Residue 113 to 121 (EDIITTGKS) coordinates 5-phospho-alpha-D-ribose 1-diphosphate. Orotate-binding residues include threonine 117 and arginine 145.

The protein belongs to the purine/pyrimidine phosphoribosyltransferase family. PyrE subfamily. Homodimer. It depends on Mg(2+) as a cofactor.

It carries out the reaction orotidine 5'-phosphate + diphosphate = orotate + 5-phospho-alpha-D-ribose 1-diphosphate. It participates in pyrimidine metabolism; UMP biosynthesis via de novo pathway; UMP from orotate: step 1/2. Functionally, catalyzes the transfer of a ribosyl phosphate group from 5-phosphoribose 1-diphosphate to orotate, leading to the formation of orotidine monophosphate (OMP). The protein is Orotate phosphoribosyltransferase of Helicobacter pylori (strain HPAG1).